A 144-amino-acid chain; its full sequence is Large ribosomal subunit protein uL13 (144 aa).

The protein belongs to the universal ribosomal protein uL13 family. In terms of assembly, part of the 50S ribosomal subunit.

This protein is one of the early assembly proteins of the 50S ribosomal subunit, although it is not seen to bind rRNA by itself. It is important during the early stages of 50S assembly. This Clostridium perfringens (strain 13 / Type A) protein is Large ribosomal subunit protein uL13.